The sequence spans 177 residues: Large ribosomal subunit protein uL5 (177 aa).

This sequence belongs to the universal ribosomal protein uL5 family. Part of the 50S ribosomal subunit; contacts the 5S rRNA and probably tRNA. Forms a bridge to the 30S subunit in the 70S ribosome.

In terms of biological role, this is one of the proteins that bind and probably mediate the attachment of the 5S RNA into the large ribosomal subunit, where it forms part of the central protuberance. In the 70S ribosome it contacts protein S13 of the 30S subunit (bridge B1b), connecting the 2 subunits; this bridge is implicated in subunit movement. May contact the P site tRNA; the 5S rRNA and some of its associated proteins might help stabilize positioning of ribosome-bound tRNAs. The chain is Large ribosomal subunit protein uL5 from Sulfurisphaera tokodaii (strain DSM 16993 / JCM 10545 / NBRC 100140 / 7) (Sulfolobus tokodaii).